The chain runs to 824 residues: Leucine--tRNA ligase (824 aa).

Residues 42–52 carry the 'HIGH' region motif; sequence PYPSGRIHMGH. The 'KMSKS' region signature appears at 581–585; it reads KMSKS. Lysine 584 contributes to the ATP binding site.

It belongs to the class-I aminoacyl-tRNA synthetase family.

It is found in the cytoplasm. It carries out the reaction tRNA(Leu) + L-leucine + ATP = L-leucyl-tRNA(Leu) + AMP + diphosphate. This is Leucine--tRNA ligase from Geotalea uraniireducens (strain Rf4) (Geobacter uraniireducens).